Consider the following 508-residue polypeptide: MTEPTQTQPAVAADENQIIAERRDKLRALREQGVAYPNDFRPTHRAAELQAKFAESDKEALEANPFEVAVAGRMMLKRVMGKASFATVQDGSGQIQFFVTPNDVGAETYDAFKKWDLGDIVAARGVLFRTNKGELSVKCTELRLLSKALRPLPDKFHGLSDQEMRYRQRYVDLIVTPETRDTFRARTKTIASIRKFMSDAEFMEVETPMLHPIPGGAAAKPFVTHHNALDMQMFLRIAPELYLKRLIVGGFERVFEINRNFRNEGVSPRHNPEFTMMEFYAAYTDYRWLMDFTEQLIRQAAIDALGTATIQYQGRELDLAKPFHRLTITQAIQKYAPQYTDGQLSDNAYLRSELKRLGVDVTQPAFLNAGIGALQLALFEETAESQLWEPTFIIDYPVEVSPLARASDTVPGITERFELFITGREIANGFSELNDPEDQAARFKKQVEQKDAGDEEAMYFDADYIRALEYGMPPTGGCGIGIDRLVMLLTDSPTIRDVLLFPHLRRED.

Glu418 and Glu425 together coordinate Mg(2+).

It belongs to the class-II aminoacyl-tRNA synthetase family. As to quaternary structure, homodimer. Requires Mg(2+) as cofactor.

It localises to the cytoplasm. It catalyses the reaction tRNA(Lys) + L-lysine + ATP = L-lysyl-tRNA(Lys) + AMP + diphosphate. This Burkholderia multivorans (strain ATCC 17616 / 249) protein is Lysine--tRNA ligase.